A 687-amino-acid chain; its full sequence is Probable intron-encoded endonuclease aI3 (687 aa).

The tract at residues 1–374 is COX1 exons 1 to 3 encoded; sequence MKQMSYVTRW…NASMDVAFHD (374 aa). Helical transmembrane passes span 19-39, 69-89, 103-123, 152-172, 188-208, 240-260, 273-293, 315-335, 341-361, and 376-396; these read IGMT…GMSV, LLMM…NFFL, LNNI…CSVL, AMFA…NFMV, PLFA…LPVL, LFWF…FGVM, FGEM…FLVW, MVIA…IYGG, VPML…LTGV, and IFIY…NNYT. The tract at residues 375-687 is COX1 intron 3 encoded; that stretch reads RIFIYYVSFF…KKESLMKFLK (313 aa).

The protein in the C-terminal section; belongs to the LAGLIDADG endonuclease family. In the N-terminal section; belongs to the heme-copper respiratory oxidase family. In terms of processing, the mature protein may arise from proteolytic cleavage of an in-frame translation of COX1 exons 1 to 3 plus intron 3, containing the aI3 open reading frame.

The protein resides in the mitochondrion. It is found in the membrane. Functionally, mitochondrial DNA endonuclease involved in intron homing. This Debaryomyces hansenii (strain ATCC 36239 / CBS 767 / BCRC 21394 / JCM 1990 / NBRC 0083 / IGC 2968) (Yeast) protein is Probable intron-encoded endonuclease aI3 (aI3).